A 134-amino-acid polypeptide reads, in one-letter code: Protein PsiE homolog (134 aa).

The next 4 membrane-spanning stretches (helical) occupy residues 14-34 (LQWI…IFLI), 56-76 (VESI…IKYF), 82-102 (FPLR…IIVS), and 106-126 (PMET…LYIS).

The protein belongs to the PsiE family.

Its subcellular location is the cell membrane. In Bacillus anthracis, this protein is Protein PsiE homolog.